Consider the following 401-residue polypeptide: Heat shock transcription factor, Y-linked (401 aa).

Residues 1–11 (MAHVSSETQDV) are compositionally biased toward polar residues. The interval 1 to 30 (MAHVSSETQDVSPKDELTASEASTRSPLCE) is disordered. Residues 76-194 (LSLNFPRKLW…PQLLVRVKRR (119 aa)) mediate DNA binding.

This sequence belongs to the HSF family. As to expression, testis-specific. Present in Sertoli cells and spermatogenic cells (at protein level).

The protein localises to the nucleus. It localises to the cytoplasm. The protein is Heat shock transcription factor, Y-linked (HSFY1) of Homo sapiens (Human).